The primary structure comprises 545 residues: Chaperonin GroEL (545 aa).

Residues 29 to 32, K50, 86 to 90, G414, 477 to 479, and D493 contribute to the ATP site; these read TMGP, DGTTT, and NAA.

The protein belongs to the chaperonin (HSP60) family. In terms of assembly, forms a cylinder of 14 subunits composed of two heptameric rings stacked back-to-back. Interacts with the co-chaperonin GroES.

The protein resides in the cytoplasm. The catalysed reaction is ATP + H2O + a folded polypeptide = ADP + phosphate + an unfolded polypeptide.. Together with its co-chaperonin GroES, plays an essential role in assisting protein folding. The GroEL-GroES system forms a nano-cage that allows encapsulation of the non-native substrate proteins and provides a physical environment optimized to promote and accelerate protein folding. In Campylobacter fetus subsp. fetus (strain 82-40), this protein is Chaperonin GroEL.